Reading from the N-terminus, the 329-residue chain is Signal recognition particle receptor FtsY (329 aa).

GTP-binding positions include 127–134, 209–213, and 273–276; these read GVNGVGKT, DTAGR, and TKLD.

The protein belongs to the GTP-binding SRP family. FtsY subfamily. As to quaternary structure, part of the signal recognition particle protein translocation system, which is composed of SRP and FtsY.

The protein localises to the cell membrane. Its subcellular location is the cytoplasm. The catalysed reaction is GTP + H2O = GDP + phosphate + H(+). Its function is as follows. Involved in targeting and insertion of nascent membrane proteins into the cytoplasmic membrane. Acts as a receptor for the complex formed by the signal recognition particle (SRP) and the ribosome-nascent chain (RNC). This Bacillus subtilis (strain 168) protein is Signal recognition particle receptor FtsY.